The following is a 376-amino-acid chain: MADYWKSQPKKFCDYCKCWIADNRPSVEFHERGKNHKENVAKRISEIKQKSLDKAKEEEKASKEFAAMEAAALKAYQEDLKRLGLESEILEPSITPVTSTIPPTSTSNQQKEKKEKKKRKKDPSKGRWVEGITSEGYHYYYDLISGASQWEKPEGFQGDLKKTAVKTVWVEGLSEDGFTYYYNTETGESRWEKPDDFIPHTSDLPSSKVNENSLGTLDESKSSDSHSDSDGEQEAEEGGVSTETEKPKIKFKEKNKNSDGGSDPETQKEKSIQKQNSLGSNEEKSKTLKKSNPYGEWQEIKQEVESHEEVDLELPSTENEYVSTSEADGGGEPKVVFKEKTVTSLGVMADGVAPVFKKRRTENGKSRNLRQRGDDQ.

The Matrin-type zinc finger occupies 11-42 (KFCDYCKCWIADNRPSVEFHERGKNHKENVAK). The segment covering 94–107 (ITPVTSTIPPTSTS) has biased composition (low complexity). Disordered stretches follow at residues 94–128 (ITPV…KGRW), 189–335 (SRWE…EPKV), and 356–376 (FKKR…GDDQ). 2 consecutive WW domains span residues 122–155 (DPSK…KPEG) and 163–196 (TAVK…KPDD). Basic and acidic residues predominate over residues 189–198 (SRWEKPDDFI). Positions 203–215 (DLPSSKVNENSLG) are enriched in polar residues. Composition is skewed to basic and acidic residues over residues 218–229 (DESKSSDSHSDS) and 243–257 (ETEK…KNKN). 3 positions are modified to phosphoserine: Ser-220, Ser-227, and Ser-229. Ser-262 carries the post-translational modification Phosphoserine. A compositionally biased stretch (basic and acidic residues) spans 298–309 (QEIKQEVESHEE). A compositionally biased stretch (polar residues) spans 316-326 (STENEYVSTSE). Positions 357–375 (KKRRTENGKSRNLRQRGDD) are interaction with SNRNP200. The span at 361 to 376 (TENGKSRNLRQRGDDQ) shows a compositional bias: basic and acidic residues.

In terms of assembly, component of the spliceosome B complex. Associated with U2 snRNPs. Binds splicing factors SNRPB, SNRPC and SF1. Interacts via the WW domains with the Pro-rich domains of KHDRBS1/SAM68. Interacts via the WW domains with the Pro-rich domains of WBP11. Interacts with SNRNP200.

Its subcellular location is the nucleus. The protein localises to the nucleus speckle. Involved in pre-mRNA splicing as a component of the spliceosome. May play a role in cross-intron bridging of U1 and U2 snRNPs in the mammalian A complex. This Homo sapiens (Human) protein is WW domain-binding protein 4 (WBP4).